Consider the following 45-residue polypeptide: uncharacterized protein (45 aa).

Belongs to the asfivirus C62L family.

This is an uncharacterized protein from Ornithodoros (relapsing fever ticks).